A 257-amino-acid polypeptide reads, in one-letter code: Urease accessory protein UreD 3 (257 aa).

A disordered region spans residues 1–22; it reads MSVRATARLRAEPDGRDGTALP.

This sequence belongs to the UreD family. As to quaternary structure, ureD, UreF and UreG form a complex that acts as a GTP-hydrolysis-dependent molecular chaperone, activating the urease apoprotein by helping to assemble the nickel containing metallocenter of UreC. The UreE protein probably delivers the nickel.

It localises to the cytoplasm. In terms of biological role, required for maturation of urease via the functional incorporation of the urease nickel metallocenter. The protein is Urease accessory protein UreD 3 of Streptomyces griseus subsp. griseus (strain JCM 4626 / CBS 651.72 / NBRC 13350 / KCC S-0626 / ISP 5235).